A 215-amino-acid chain; its full sequence is Pyrrolidone-carboxylate peptidase (215 aa).

Residues Glu-80, Cys-143, and His-167 contribute to the active site.

This sequence belongs to the peptidase C15 family. Homotetramer.

Its subcellular location is the cytoplasm. It catalyses the reaction Release of an N-terminal pyroglutamyl group from a polypeptide, the second amino acid generally not being Pro.. Functionally, removes 5-oxoproline from various penultimate amino acid residues except L-proline. This is Pyrrolidone-carboxylate peptidase from Bacillus mycoides (strain KBAB4) (Bacillus weihenstephanensis).